The chain runs to 334 residues: Fructose-1,6-bisphosphatase class 1 (334 aa).

Residues Glu92, Asp114, Leu116, and Asp117 each coordinate Mg(2+). Substrate is bound by residues 117-120 (DGSS) and Asn209. Glu281 is a binding site for Mg(2+).

The protein belongs to the FBPase class 1 family. In terms of assembly, homotetramer. The cofactor is Mg(2+).

The protein localises to the cytoplasm. The catalysed reaction is beta-D-fructose 1,6-bisphosphate + H2O = beta-D-fructose 6-phosphate + phosphate. It participates in carbohydrate biosynthesis; gluconeogenesis. The sequence is that of Fructose-1,6-bisphosphatase class 1 from Nitrosomonas eutropha (strain DSM 101675 / C91 / Nm57).